A 397-amino-acid polypeptide reads, in one-letter code: MYVSNHRSRRVARVSVSCLVAALAAMSCGAALAADQVDPQLKFAMQRDLGIFPTQLPQYLQTEKLARTQAAAIEREFGAQFAGSWIERNEDGSFKLVAATSGARKSSTLGGVEVRNVRYSLKQLQSAMEQLDAGANARVKGVSKPLDGVQSWYVDPRSNAVVVKVDDGATEAGVDFVALSGADSAQVRIESSPGKLQTTANIVGGIEYSINNASLCSVGFSVTRGATKGFVTAGHCGTVNATARIGGAVVGTFAARVFPGNDRAWVSLTSAQTLLPRVANGSSFVTVRGSTEAAVGAAVCRSGRTTGYQCGTITAKNVTANYAEGAVRGLTQGNACMGRGDSGGSWITSAGQAQGVMSGGNVQSNGNNCGIPASQRSSLFERLQPILSQYGLSLVTG.

The first 24 residues, 1–24 (MYVSNHRSRRVARVSVSCLVAALA), serve as a signal peptide directing secretion. The propeptide occupies 25–199 (AMSCGAALAA…ESSPGKLQTT (175 aa)). A disulfide bridge links cysteine 216 with cysteine 236. Catalysis depends on charge relay system residues histidine 235 and aspartate 262. Cystine bridges form between cysteine 300-cysteine 310 and cysteine 336-cysteine 369. Serine 342 (charge relay system) is an active-site residue.

Belongs to the peptidase S1 family.

The enzyme catalyses Preferential cleavage: Ala-|-Xaa, Val-|-Xaa in bacterial cell walls, elastin and other proteins.. The polypeptide is Alpha-lytic protease (alpha-LP) (Lysobacter enzymogenes).